The following is a 95-amino-acid chain: MGRSKKKGPYVDRKLLEKIRKLNETGEKKVIKTWSRASMIIPEMVGHTIAVYNGMKHIPVYITENMIGHRLGEFAPTRRFGGHADKKAKKGELKK.

The interval 76-95 (PTRRFGGHADKKAKKGELKK) is disordered. Over residues 82–95 (GHADKKAKKGELKK) the composition is skewed to basic and acidic residues.

The protein belongs to the universal ribosomal protein uS19 family.

In terms of biological role, protein S19 forms a complex with S13 that binds strongly to the 16S ribosomal RNA. The sequence is that of Small ribosomal subunit protein uS19 from Thermotoga neapolitana (strain ATCC 49049 / DSM 4359 / NBRC 107923 / NS-E).